The following is a 207-amino-acid chain: Guanylate kinase (207 aa).

Residues 5–185 enclose the Guanylate kinase-like domain; that stretch reads GFVLLISGPS…SYEALRAILI (181 aa). 12-19 serves as a coordination point for ATP; that stretch reads GPSGAGKS.

Belongs to the guanylate kinase family.

The protein localises to the cytoplasm. The enzyme catalyses GMP + ATP = GDP + ADP. Its function is as follows. Essential for recycling GMP and indirectly, cGMP. The chain is Guanylate kinase (gmk) from Campylobacter jejuni subsp. jejuni serotype O:2 (strain ATCC 700819 / NCTC 11168).